Consider the following 132-residue polypeptide: Small ribosomal subunit protein uS8 (132 aa).

Belongs to the universal ribosomal protein uS8 family. As to quaternary structure, part of the 30S ribosomal subunit. Contacts proteins S5 and S12.

One of the primary rRNA binding proteins, it binds directly to 16S rRNA central domain where it helps coordinate assembly of the platform of the 30S subunit. The polypeptide is Small ribosomal subunit protein uS8 (Clostridium botulinum (strain ATCC 19397 / Type A)).